The sequence spans 465 residues: Cystathionine beta-lyase (465 aa).

An N6-(pyridoxal phosphate)lysine modification is found at Lys213.

This sequence belongs to the trans-sulfuration enzymes family. Requires pyridoxal 5'-phosphate as cofactor.

The protein resides in the cytoplasm. Its subcellular location is the nucleus. It carries out the reaction L,L-cystathionine + H2O = L-homocysteine + pyruvate + NH4(+). It catalyses the reaction an S-substituted L-cysteine + H2O = a thiol + pyruvate + NH4(+). The protein operates within amino-acid biosynthesis; L-methionine biosynthesis via de novo pathway; L-homocysteine from L-cystathionine: step 1/1. This is Cystathionine beta-lyase (STR3) from Saccharomyces cerevisiae (strain ATCC 204508 / S288c) (Baker's yeast).